The primary structure comprises 743 residues: Catalase-peroxidase (743 aa).

The interval 1–29 (MNAESGENAGGGCPLGHGAGAPRKRPSNR) is disordered. The span at 8-19 (NAGGGCPLGHGA) shows a compositional bias: gly residues. A cross-link (tryptophyl-tyrosyl-methioninium (Trp-Tyr) (with M-248)) is located at residues 100-222 (WHSAGTYRIT…LGAVQMGLIY (123 aa)). The active-site Proton acceptor is His101. Residues 222-248 (YVNPEGPNGNPDPKAAAVDIRETFARM) constitute a cross-link (tryptophyl-tyrosyl-methioninium (Tyr-Met) (with W-100)). Residue His263 coordinates heme b.

The protein belongs to the peroxidase family. Peroxidase/catalase subfamily. In terms of assembly, homodimer or homotetramer. Heme b is required as a cofactor. Post-translationally, formation of the three residue Trp-Tyr-Met cross-link is important for the catalase, but not the peroxidase activity of the enzyme.

The catalysed reaction is H2O2 + AH2 = A + 2 H2O. The enzyme catalyses 2 H2O2 = O2 + 2 H2O. Functionally, bifunctional enzyme with both catalase and broad-spectrum peroxidase activity. This is Catalase-peroxidase from Stutzerimonas stutzeri (strain A1501) (Pseudomonas stutzeri).